The following is a 412-amino-acid chain: uncharacterized protein (412 aa).

Residues Met1–Pro17 are compositionally biased toward polar residues. 3 disordered regions span residues Met1 to Gly20, Glu223 to Thr243, and Gln310 to Ala412. Residues Lys340–Asn355 are compositionally biased toward polar residues. Positions Gly361–Gly379 are enriched in gly residues. A compositionally biased stretch (low complexity) spans Ser390–Asn402. A compositionally biased stretch (polar residues) spans Ala403 to Ala412.

This is an uncharacterized protein from Schizosaccharomyces pombe (strain 972 / ATCC 24843) (Fission yeast).